Consider the following 183-residue polypeptide: dCTP deaminase (183 aa).

Residue 106–111 (KSTYAR) participates in dCTP binding. The Proton donor/acceptor role is filled by Glu132. DCTP contacts are provided by Gln151, Tyr165, and Gln175.

Belongs to the dCTP deaminase family. As to quaternary structure, homotrimer.

The catalysed reaction is dCTP + H2O + H(+) = dUTP + NH4(+). It functions in the pathway pyrimidine metabolism; dUMP biosynthesis; dUMP from dCTP (dUTP route): step 1/2. Catalyzes the deamination of dCTP to dUTP. In Gluconobacter oxydans (strain 621H) (Gluconobacter suboxydans), this protein is dCTP deaminase.